The primary structure comprises 500 residues: NAD(P)H-quinone oxidoreductase chain 4, chloroplastic (500 aa).

14 helical membrane-spanning segments follow: residues 4-24, 35-55, 87-107, 113-130, 134-154, 167-187, 208-228, 242-262, 272-292, 305-325, 330-350, 386-406, 411-431, and 462-482; these read FPWLTIIVVFPIFAGSLIFFL, YTICICILELLLTTYAFCYHF, IGPILLTGFITTLATLAAWPI, LFHFLMLAMYSGQIGSFS, LLLFFIMWELELIPVYLLLCM, FILYTAGGSVFLLMGVLGVAL, VLEIIFYIGFFIAFAVKSPII, HYSTCMLLAGILLKMGAYGLI, AHSIFSPWLMIIGTIQIIYAA, IAYSSVSHMGFIIIGISSLTD, GALLQIISHGFIGAALFFLAG, LALPGMSGFVAELIVFFGIIT, LLIPKILITFVMAIGMILTPI, and LFLSISIFLPVIGIGIYPDFV.

The protein belongs to the complex I subunit 4 family.

The protein localises to the plastid. Its subcellular location is the chloroplast thylakoid membrane. The catalysed reaction is a plastoquinone + NADH + (n+1) H(+)(in) = a plastoquinol + NAD(+) + n H(+)(out). It carries out the reaction a plastoquinone + NADPH + (n+1) H(+)(in) = a plastoquinol + NADP(+) + n H(+)(out). This is NAD(P)H-quinone oxidoreductase chain 4, chloroplastic from Nicotiana tomentosiformis (Tobacco).